The primary structure comprises 244 residues: tRNA pseudouridine synthase A (244 aa).

The active-site Nucleophile is the aspartate 53. Tyrosine 111 is a binding site for substrate.

Belongs to the tRNA pseudouridine synthase TruA family. Homodimer.

It catalyses the reaction uridine(38/39/40) in tRNA = pseudouridine(38/39/40) in tRNA. Functionally, formation of pseudouridine at positions 38, 39 and 40 in the anticodon stem and loop of transfer RNAs. This chain is tRNA pseudouridine synthase A, found in Bacillus sp. (strain KSM-64).